The sequence spans 90 residues: Small ribosomal subunit protein bS18 (90 aa).

Residues 1-23 (MKPMRQKNTRAQGNKSISNALAS) form a disordered region. Residues 9–21 (TRAQGNKSISNAL) show a composition bias toward polar residues.

It belongs to the bacterial ribosomal protein bS18 family. As to quaternary structure, part of the 30S ribosomal subunit. Forms a tight heterodimer with protein bS6.

Functionally, binds as a heterodimer with protein bS6 to the central domain of the 16S rRNA, where it helps stabilize the platform of the 30S subunit. The chain is Small ribosomal subunit protein bS18 from Chlorobium luteolum (strain DSM 273 / BCRC 81028 / 2530) (Pelodictyon luteolum).